A 240-amino-acid chain; its full sequence is Homeobox-leucine zipper protein HOX14 (240 aa).

Residues S26–R64 form a disordered region. A compositionally biased stretch (basic residues) spans R35–A44. Residues C46–V56 are compositionally biased toward gly residues. The segment at residues G59 to L118 is a DNA-binding region (homeobox). The stretch at Q108–S167 forms a coiled coil.

It belongs to the HD-ZIP homeobox family. Class I subfamily. In terms of tissue distribution, expressed in roots, stems, leaf blades and panicles.

The protein resides in the nucleus. Functionally, probable transcription factor. This chain is Homeobox-leucine zipper protein HOX14 (HOX14), found in Oryza sativa subsp. japonica (Rice).